The primary structure comprises 204 residues: Large ribosomal subunit protein uL4 (204 aa).

The segment at 49-75 (TKGRSDVSGGGKKPWRQKGRGGARAGS) is disordered.

The protein belongs to the universal ribosomal protein uL4 family. Part of the 50S ribosomal subunit.

Functionally, one of the primary rRNA binding proteins, this protein initially binds near the 5'-end of the 23S rRNA. It is important during the early stages of 50S assembly. It makes multiple contacts with different domains of the 23S rRNA in the assembled 50S subunit and ribosome. Its function is as follows. Forms part of the polypeptide exit tunnel. The protein is Large ribosomal subunit protein uL4 of Campylobacter jejuni (strain RM1221).